The following is a 459-amino-acid chain: DNA-binding protein P3A2 (459 aa).

The disordered stretch occupies residues 1–25 (MMISEDISEPSSPDTPFDDSDLLNS).

It belongs to the NRF1/Ewg family.

Its subcellular location is the nucleus. Transcriptional regulator that interacts with specific sites in the control region of the cyIIIa actin gene. Also binds specifically to similar target sites located in the regulatory region of the SM50 gene. The chain is DNA-binding protein P3A2 from Strongylocentrotus purpuratus (Purple sea urchin).